Here is a 276-residue protein sequence, read N- to C-terminus: 2-dehydro-3-deoxyphosphooctonate aldolase (276 aa).

Belongs to the KdsA family.

The protein localises to the cytoplasm. It catalyses the reaction D-arabinose 5-phosphate + phosphoenolpyruvate + H2O = 3-deoxy-alpha-D-manno-2-octulosonate-8-phosphate + phosphate. Its pathway is carbohydrate biosynthesis; 3-deoxy-D-manno-octulosonate biosynthesis; 3-deoxy-D-manno-octulosonate from D-ribulose 5-phosphate: step 2/3. In Stenotrophomonas maltophilia (strain K279a), this protein is 2-dehydro-3-deoxyphosphooctonate aldolase.